A 370-amino-acid chain; its full sequence is Cyclic AMP-responsive element-binding protein 3-like protein 4 (370 aa).

Residues 1-55 form a required for transcriptional activation region; it reads MELGCPELLEPPEDIFSTGSFLELGFNGPASKVPVTRGLQKSEPDDFLNLFIDPN. At 1-271 the chain is on the cytoplasmic side; sequence MELGCPELLE…QTSSRAAQTS (271 aa). The disordered stretch occupies residues 61–85; it reads ETSPGRDSGVSEDPGSPAQQASSSP. Residues 76 to 85 are compositionally biased toward low complexity; it reads SPAQQASSSP. A bZIP domain is found at 193 to 256; sequence ILKKIRRKIR…IFLMEQVRQL (64 aa). Positions 195–234 are basic motif; sequence KKIRRKIRNKQSAQDSRRRKKEYLDGLESRVAACSEQNQK. The tract at residues 235–256 is leucine-zipper; that stretch reads LQRKVQELERQNIFLMEQVRQL. A helical; Signal-anchor for type II membrane protein transmembrane segment spans residues 272-292; it reads TCVLILLFSLALIILPSFSPF. Topologically, residues 293 to 370 are lumenal; that stretch reads QGQSEARPED…IRGMVHTDEM (78 aa). 2 N-linked (GlcNAc...) asparagine glycosylation sites follow: asparagine 318 and asparagine 342.

It belongs to the bZIP family. ATF subfamily. In terms of assembly, binds DNA as a dimer. Forms a heterodimer with CREM isoform Tau. In terms of processing, controlled by regulated intramembrane proteolysis (RIP). Following ER stress a fragment containing the cytoplasmic transcription factor domain is released by proteolysis. The cleavage seems to be performed sequentially by site-1 and site-2 proteases (PS1 and PS2). PS1 cleavage may be suppressed by a determinant in the C-terminal region. In terms of tissue distribution, predominantly expressed at high levels in testis with isoform 2 being the predominant isoform. Specifically expressed in postmeiotic spermatids and accumulates in the mid/late stage (at protein level). Ubiquitously expressed at low levels.

The protein localises to the endoplasmic reticulum membrane. It localises to the cytoplasmic vesicle. It is found in the secretory vesicle. The protein resides in the acrosome inner membrane. Its subcellular location is the nucleus. Its function is as follows. Transcriptional activator that may play a role in the unfolded protein response of the testis. Proposed to be involved in spermiogenesis. May be involved in regulating the maturation of sperm head nuclei. Alternatively proposed to be a paternally delivered transcription factor that may function in early zygotic gene activation. Increases the binding of CREM isoform Tau with CRE. The CREM isoform Tau-CREB3L4 heterodimer functions through CRE but not through UPRE and may recruit HIRA to CRE to regulate histone exchange. This is Cyclic AMP-responsive element-binding protein 3-like protein 4 (Creb3l4) from Mus musculus (Mouse).